We begin with the raw amino-acid sequence, 92 residues long: N(2)-fixation sustaining protein CowN (92 aa).

The protein belongs to the CowN family.

Functionally, is required to sustain N(2)-dependent growth in the presence of low levels of carbon monoxide (CO). Probably acts by protecting the N(2) fixation ability of the nitrogenase complex, which is inactivated in the presence of CO. The sequence is that of N(2)-fixation sustaining protein CowN from Rhodobacter capsulatus (strain ATCC BAA-309 / NBRC 16581 / SB1003).